The following is a 111-amino-acid chain: uncharacterized protein (111 aa).

In terms of assembly, homodimer, or homotetramer.

This is an uncharacterized protein from Bacillus subtilis (strain 168).